Here is a 571-residue protein sequence, read N- to C-terminus: Proline--tRNA ligase (571 aa).

This sequence belongs to the class-II aminoacyl-tRNA synthetase family. ProS type 1 subfamily. In terms of assembly, homodimer.

It is found in the cytoplasm. The enzyme catalyses tRNA(Pro) + L-proline + ATP = L-prolyl-tRNA(Pro) + AMP + diphosphate. Its function is as follows. Catalyzes the attachment of proline to tRNA(Pro) in a two-step reaction: proline is first activated by ATP to form Pro-AMP and then transferred to the acceptor end of tRNA(Pro). As ProRS can inadvertently accommodate and process non-cognate amino acids such as alanine and cysteine, to avoid such errors it has two additional distinct editing activities against alanine. One activity is designated as 'pretransfer' editing and involves the tRNA(Pro)-independent hydrolysis of activated Ala-AMP. The other activity is designated 'posttransfer' editing and involves deacylation of mischarged Ala-tRNA(Pro). The misacylated Cys-tRNA(Pro) is not edited by ProRS. This Glaesserella parasuis serovar 5 (strain SH0165) (Haemophilus parasuis) protein is Proline--tRNA ligase.